Reading from the N-terminus, the 272-residue chain is Phosphate import ATP-binding protein PstB (272 aa).

The ABC transporter domain occupies 18 to 257 (VSMQNVTISY…FNDTQSIFNS (240 aa)). 50 to 57 (GPSGCGKS) contacts ATP.

This sequence belongs to the ABC transporter superfamily. Phosphate importer (TC 3.A.1.7) family. In terms of assembly, the complex is composed of two ATP-binding proteins (PstB), two transmembrane proteins (PstC and PstA) and a solute-binding protein (PstS).

It is found in the cell inner membrane. The catalysed reaction is phosphate(out) + ATP + H2O = ADP + 2 phosphate(in) + H(+). Functionally, part of the ABC transporter complex PstSACB involved in phosphate import. Responsible for energy coupling to the transport system. The protein is Phosphate import ATP-binding protein PstB of Synechococcus sp. (strain CC9902).